The primary structure comprises 763 residues: Endoplasmic reticulum membrane sensor NFE2L1 (763 aa).

Residues 7 to 24 form a helical; Signal-anchor for type II membrane protein membrane-spanning segment; sequence YLTEGLLQFTILLSLIGV. The segment at 108 to 150 is disordered; it reads DPEGSVSGSQPSSGLALESSSGLQDVTGPDNGVRESETEQGFS. A compositionally biased stretch (low complexity) spans 116-131; sequence SQPSSGLALESSSGLQ. Residues 180 to 188 are cholesterol recognition/amino acid consensus (CRAC) region; it reads IFDYSHRQK. N-linked (GlcNAc...) asparagine glycosylation is found at asparagine 338 and asparagine 350. A CPD region spans residues 369 to 373; sequence SPEVE. Asparagine 413 carries an N-linked (GlcNAc...) asparagine glycan. Disordered regions lie at residues 460–523 and 585–604; these read EEEF…DSET and TLKK…QMSR. The Destruction motif signature appears at 466–470; that stretch reads DSGLS. The span at 466–514 shows a compositional bias: low complexity; sequence DSGLSLDSSHSPSSLSSSEGSSSSSSSSSSSSSSSASSSASSSFSEEGA. Serine 519 is modified (phosphoserine; by CK2). Residues 589–604 are compositionally biased toward basic and acidic residues; sequence GSKEKQADFLDKQMSR. Serine 590 bears the Phosphoserine; by PKA mark. In terms of domain architecture, bZIP spans 645-708; sequence LIRDIRRRGK…RQMKQKVQSL (64 aa). Residues 647–666 are basic motif; it reads RDIRRRGKNKMAAQNCRKRK. The leucine-zipper stretch occupies residues 673–687; sequence LERDVEDLQRDKARL. A Nuclear localization signal motif is present at residues 752–759; sequence RRQERKPK.

The protein belongs to the bZIP family. CNC subfamily. Interacts with KEAP1. As to quaternary structure, interacts (via CPD region) with FBXW7; leading to its ubiquitination and degradation. Interacts with SYVN1/HRD1; leading to its ubiquitination and degradation. Interacts (when ubiquitinated) with DDI2; leading to its cleavage. In terms of assembly, interacts (via the bZIP domain) with small MAF protein (MAFF, MAFG or MAFK); required for binding to antioxidant response elements (AREs) on DNA. Interacts (via Destruction motif) with BTRC; leading to its ubiquitination and degradation. Interacts with CEBPB; the heterodimer represses expression of DSPP during odontoblast differentiation. Interacts with MOTS-c, a peptide produced by the mitochondrially encoded 12S rRNA MT-RNR1. In terms of processing, cleaved at Leu-104 by the aspartyl protease DDI2 following retrotranslocation, releasing the protein from the endoplasmic reticulum membrane and forming the transcription factor NRF1 that translocates into the nucleus. Ubiquitination is prerequisite for cleavage by aspartyl protease DDI2. Post-translationally, N-glycosylated in normal conditions, when it has a single-pass type II membrane protein topology, with the DNA-binding domain facing the endoplasmic reticulum lumen. Deglycosylated during retrotranslocation to the cytosolic side of the membrane, to have a single-pass type III membrane protein topology with the major part of the protein facing the cytosol. Ubiquitinated by the SCF(FBXW7) complex and SYVN1/HRD1, leading to its degradation by the proteasome. Ubiquitinated during retrotranslocation to the cytosolic side of the membrane: ubiquitination does not lead to degradation and is required for processing by the aspartyl protease DDI2 and subsequent release from the endoplasmic reticulum membrane. In terms of processing, phosphorylation by CK2 at Ser-519 inhibits transcription factor activity, possibly by affecting DNA-binding activity. Phosphorylation at Ser-590 is required for interaction with CEBPB. Post-translationally, ubiquitinated by the SCF(BTRC) complex in the nucleus, leading to its degradation by the proteasome.

The protein resides in the endoplasmic reticulum membrane. Its subcellular location is the nucleus. Functionally, endoplasmic reticulum membrane sensor that translocates into the nucleus in response to various stresses to act as a transcription factor. Constitutes a precursor of the transcription factor NRF1. Able to detect various cellular stresses, such as cholesterol excess, oxidative stress or proteasome inhibition. In response to stress, it is released from the endoplasmic reticulum membrane following cleavage by the protease DDI2 and translocates into the nucleus to form the transcription factor NRF1. Acts as a key sensor of cholesterol excess: in excess cholesterol conditions, the endoplasmic reticulum membrane form of the protein directly binds cholesterol via its CRAC motif, preventing cleavage and release of the transcription factor NRF1, thereby allowing expression of genes promoting cholesterol removal, such as CD36. Involved in proteasome homeostasis: in response to proteasome inhibition, it is released from the endoplasmic reticulum membrane, translocates to the nucleus and activates expression of genes encoding proteasome subunits. In terms of biological role, CNC-type bZIP family transcription factor that translocates to the nucleus and regulates expression of target genes in response to various stresses. Heterodimerizes with small-Maf proteins (MAFF, MAFG or MAFK) and binds DNA motifs including the antioxidant response elements (AREs), which regulate expression of genes involved in oxidative stress response. Activates or represses expression of target genes, depending on the context. Plays a key role in cholesterol homeostasis by acting as a sensor of cholesterol excess: in low cholesterol conditions, translocates into the nucleus and represses expression of genes involved in defense against cholesterol excess, such as CD36. In excess cholesterol conditions, the endoplasmic reticulum membrane form of the protein directly binds cholesterol via its CRAC motif, preventing cleavage and release of the transcription factor NRF1, thereby allowing expression of genes promoting cholesterol removal. Critical for redox balance in response to oxidative stress: acts by binding the AREs motifs on promoters and mediating activation of oxidative stress response genes, such as GCLC, GCLM, GSS, MT1 and MT2. Plays an essential role during fetal liver hematopoiesis: probably has a protective function against oxidative stress and is involved in lipid homeostasis in the liver. Involved in proteasome homeostasis: in response to proteasome inhibition, mediates the 'bounce-back' of proteasome subunits by translocating into the nucleus and activating expression of genes encoding proteasome subunits. Also involved in regulating glucose flux. Together with CEBPB; represses expression of DSPP during odontoblast differentiation. In response to ascorbic acid induction, activates expression of SP7/Osterix in osteoblasts. This is Endoplasmic reticulum membrane sensor NFE2L1 from Bos taurus (Bovine).